Consider the following 103-residue polypeptide: Integration host factor subunit beta (103 aa).

The tract at residues 62 to 81 is disordered; sequence RNPKTGESVALPGKHVPHFK.

Belongs to the bacterial histone-like protein family. Heterodimer of an alpha and a beta chain.

Functionally, this protein is one of the two subunits of integration host factor, a specific DNA-binding protein that functions in genetic recombination as well as in transcriptional and translational control. This chain is Integration host factor subunit beta, found in Xanthomonas axonopodis pv. citri (strain 306).